Consider the following 355-residue polypeptide: Chorismate synthase (355 aa).

Arg-48 contributes to the NADP(+) binding site. FMN is bound by residues 126–128 (RSS), Gly-278, 293–297 (KPIPS), and Arg-319.

It belongs to the chorismate synthase family. As to quaternary structure, homotetramer. The cofactor is FMNH2.

It carries out the reaction 5-O-(1-carboxyvinyl)-3-phosphoshikimate = chorismate + phosphate. It functions in the pathway metabolic intermediate biosynthesis; chorismate biosynthesis; chorismate from D-erythrose 4-phosphate and phosphoenolpyruvate: step 7/7. Catalyzes the anti-1,4-elimination of the C-3 phosphate and the C-6 proR hydrogen from 5-enolpyruvylshikimate-3-phosphate (EPSP) to yield chorismate, which is the branch point compound that serves as the starting substrate for the three terminal pathways of aromatic amino acid biosynthesis. This reaction introduces a second double bond into the aromatic ring system. The protein is Chorismate synthase of Oleidesulfovibrio alaskensis (strain ATCC BAA-1058 / DSM 17464 / G20) (Desulfovibrio alaskensis).